The following is a 435-amino-acid chain: Xylose isomerase (435 aa).

Residues His100 and Asp103 contribute to the active site. Glu231, Glu267, His270, Asp295, Asp306, Asp308, and Asp338 together coordinate Mg(2+).

It belongs to the xylose isomerase family. As to quaternary structure, homotetramer. Requires Mg(2+) as cofactor.

The protein localises to the cytoplasm. It carries out the reaction alpha-D-xylose = alpha-D-xylulofuranose. This is Xylose isomerase from Brucella canis (strain ATCC 23365 / NCTC 10854 / RM-666).